A 114-amino-acid chain; its full sequence is uncharacterized protein (114 aa).

This is an uncharacterized protein from Escherichia coli O157:H7.